The sequence spans 430 residues: Histidine--tRNA ligase (430 aa).

Belongs to the class-II aminoacyl-tRNA synthetase family. Homodimer.

The protein localises to the cytoplasm. It catalyses the reaction tRNA(His) + L-histidine + ATP = L-histidyl-tRNA(His) + AMP + diphosphate + H(+). This chain is Histidine--tRNA ligase (hisS), found in Clostridium acetobutylicum (strain ATCC 824 / DSM 792 / JCM 1419 / IAM 19013 / LMG 5710 / NBRC 13948 / NRRL B-527 / VKM B-1787 / 2291 / W).